Reading from the N-terminus, the 88-residue chain is Small ribosomal subunit protein uS19 (88 aa).

This sequence belongs to the universal ribosomal protein uS19 family.

Protein S19 forms a complex with S13 that binds strongly to the 16S ribosomal RNA. The protein is Small ribosomal subunit protein uS19 of Chlamydia abortus (strain DSM 27085 / S26/3) (Chlamydophila abortus).